Here is a 157-residue protein sequence, read N- to C-terminus: Phosphopantetheine adenylyltransferase (157 aa).

Ser-8 serves as a coordination point for substrate. Residues 8–9 and His-16 contribute to the ATP site; that span reads SF. Residues Lys-40, Thr-72, and Arg-86 each coordinate substrate. ATP contacts are provided by residues 87–89, Glu-97, and 122–128; these read GLR and HSFLSSS.

It belongs to the bacterial CoaD family. Homohexamer. Mg(2+) serves as cofactor.

The protein resides in the cytoplasm. The enzyme catalyses (R)-4'-phosphopantetheine + ATP + H(+) = 3'-dephospho-CoA + diphosphate. The protein operates within cofactor biosynthesis; coenzyme A biosynthesis; CoA from (R)-pantothenate: step 4/5. In terms of biological role, reversibly transfers an adenylyl group from ATP to 4'-phosphopantetheine, yielding dephospho-CoA (dPCoA) and pyrophosphate. This is Phosphopantetheine adenylyltransferase from Prochlorococcus marinus (strain MIT 9313).